Consider the following 418-residue polypeptide: STE20-related kinase adapter protein beta (418 aa).

The Protein kinase domain maps to 58 to 369; it reads YELQVEIGRG…ASSLLSHVFF (312 aa). ATP-binding positions include 64-72 and Lys89; that span reads IGRGFDNLT.

Belongs to the protein kinase superfamily. STE Ser/Thr protein kinase family. STE20 subfamily. Component of a trimeric complex composed of STK11/LKB1, STRAD (STRADA or STRADB) and CAB39/MO25 (CAB39/MO25alpha or CAB39L/MO25beta): the complex tethers STK11/LKB1 in the cytoplasm and stimulates its catalytic activity. Interacts with BIRC4/XIAP. These two proteins are likely to coexist in a complex with TAK1, TRAF6, TAB1 and TAB2.

Its subcellular location is the nucleus. It localises to the cytoplasm. Functionally, pseudokinase which, in complex with CAB39/MO25 (CAB39/MO25alpha or CAB39L/MO25beta), binds to and activates STK11/LKB1. Adopts a closed conformation typical of active protein kinases and binds STK11/LKB1 as a pseudosubstrate, promoting conformational change of STK11/LKB1 in an active conformation. The chain is STE20-related kinase adapter protein beta (Stradb) from Mus musculus (Mouse).